The following is a 123-amino-acid chain: Small ribosomal subunit protein uS12 (123 aa).

Asp89 carries the post-translational modification 3-methylthioaspartic acid.

The protein belongs to the universal ribosomal protein uS12 family. In terms of assembly, part of the 30S ribosomal subunit. Contacts proteins S8 and S17. May interact with IF1 in the 30S initiation complex.

Its function is as follows. With S4 and S5 plays an important role in translational accuracy. Interacts with and stabilizes bases of the 16S rRNA that are involved in tRNA selection in the A site and with the mRNA backbone. Located at the interface of the 30S and 50S subunits, it traverses the body of the 30S subunit contacting proteins on the other side and probably holding the rRNA structure together. The combined cluster of proteins S8, S12 and S17 appears to hold together the shoulder and platform of the 30S subunit. The protein is Small ribosomal subunit protein uS12 of Rhizobium meliloti (strain 1021) (Ensifer meliloti).